The following is a 317-amino-acid chain: DNA repair nuclease/redox regulator APEX1 (317 aa).

The tract at residues 1–32 (MPKRGKRAAAEDGEEPKSEPETKKSKGAAKKT) is necessary for interaction with YBX1, binding to RNA, association together with NPM1 to rRNA, endoribonuclease activity on abasic RNA and localization in the nucleoli. A disordered region spans residues 1-57 (MPKRGKRAAAEDGEEPKSEPETKKSKGAAKKTEKEAAGEGPVLYEDPPDQKTSASGK). Lys6 is modified (N6-acetyllysine; by EP300). The Nuclear localization signal (NLS) motif lies at 8–12 (AAAED). Residues 15–37 (EPKSEPETKKSKGAAKKTEKEAA) show a composition bias toward basic and acidic residues. Ser18 carries the phosphoserine modification. The interval 22-32 (TKKSKGAAKKT) is necessary for interaction with NPM1 and for efficient rRNA binding. 4 positions are modified to N6-acetyllysine: Lys26, Lys30, Lys31, and Lys34. Ser53 carries the phosphoserine modification. The Nuclear export signal (NES) motif lies at 63–79 (ICSWNVDGLRAWIKKKG). An S-nitrosocysteine; alternate modification is found at Cys64. Cysteines 64 and 92 form a disulfide. Asp69 provides a ligand contact to Mg(2+). An S-nitrosocysteine; alternate modification is found at Cys92. Glu95 provides a ligand contact to Mg(2+). Tyr170 is an active-site residue. An N6-acetyllysine modification is found at Lys196. Mg(2+) contacts are provided by Asp209 and Asn211. Asp209 serves as the catalytic Proton donor/acceptor. Position 232 is a phosphothreonine; by CDK5 (Thr232). Residues 288–317 (HSLLPALCDSKIRSKALGSDHCPITLYLAL) form a mitochondrial targeting sequence (MTS) region. Asp307 is a binding site for Mg(2+). Cys309 is subject to S-nitrosocysteine.

Belongs to the DNA repair enzymes AP/ExoA family. Monomer. Homodimer; disulfide-linked. Component of the SET complex, composed of at least APEX1, SET, ANP32A, HMGB2, NME1 and TREX1. Associates with the dimer XRCC5/XRCC6 in a DNA-dependent manner. Interacts with SIRT1; the interaction is increased in the context of genotoxic stress. Interacts with HDAC1, HDAC2 and HDAC3; the interactions are not dependent on the APEX1 acetylation status. Interacts with XRCC1; the interaction is induced by SIRT1 and increased with the APEX1 acetylated form. Interacts with NPM1 (via N-terminal domain); the interaction is RNA-dependent and decreases in hydrogen peroxide-damaged cells. Interacts (via N-terminus) with YBX1 (via C-terminus); the interaction is increased in presence of APEX1 acetylated. Interacts with HNRNPL; the interaction is DNA-dependent. Interacts (via N-terminus) with KPNA1 and KPNA2. Interacts with TXN; the interaction stimulates the FOS/JUN AP-1 complex DNA-binding activity in a redox-dependent manner. Interacts with GZMA, KRT8, MDM2, POLB, PRDX6, PRPF19, RPLP0, TOMM20 and WDR77. Binds to CDK5. Mg(2+) serves as cofactor. Mn(2+) is required as a cofactor. Phosphorylated. Phosphorylation by kinase PKC or casein kinase CK2 results in enhanced redox activity that stimulates binding of the FOS/JUN AP-1 complex to its cognate binding site. AP-endodeoxyribonuclease activity is not affected by CK2-mediated phosphorylation. Phosphorylation of Thr-232 by CDK5 in response to MPP(+)/MPTP (1-methyl-4-phenylpyridinium) reduces AP-endodeoxyribonuclease activity resulting in accumulation of DNA damage and contributing to neuronal death. In terms of processing, acetylated on Lys-6. Acetylation is increased by the transcriptional coactivator EP300 acetyltransferase, genotoxic agents like H(2)O(2) and methyl methanesulfonate (MMS). Acetylation increases its binding affinity to the negative calcium response element (nCaRE) DNA promoter. The acetylated form induces a stronger binding of YBX1 to the Y-box sequence in the MDR1 promoter than the unacetylated form. Deacetylated on lysines. Lys-6 is deacetylated by SIRT1. Post-translationally, cleaved at Lys-30 by granzyme A to create the mitochondrial form; leading in reduction of binding to DNA, AP endodeoxyribonuclease activity, redox activation of transcription factors and to enhanced cell death. Cleaved by granzyme K; leading to intracellular ROS accumulation and enhanced cell death after oxidative stress. Cys-64 and Cys-92 are nitrosylated in response to nitric oxide (NO) and lead to the exposure of the nuclear export signal (NES). In terms of processing, ubiquitinated by MDM2; leading to translocation to the cytoplasm and proteasomal degradation.

The protein localises to the nucleus. It is found in the nucleolus. It localises to the nucleus speckle. The protein resides in the endoplasmic reticulum. Its subcellular location is the cytoplasm. The protein localises to the mitochondrion. It carries out the reaction a deoxyribonucleotide-2'-deoxyribose-5'-monophosphate-DNA + H2O = a 5'-end 2'-deoxyribose-5'-monophosphate-DNA + a 3'-end 2'-deoxyribonucleotide-DNA + H(+). The catalysed reaction is Exonucleolytic cleavage in the 3'- to 5'-direction to yield nucleoside 5'-phosphates.. It catalyses the reaction a 3'-end 2'-deoxyribonucleotide-3'-phosphoglycolate-DNA + H2O = 2-phosphoglycolate + a 3'-end 2'-deoxyribonucleotide-DNA + H(+). The enzyme catalyses a 3'-end 2'-deoxyribonucleotide-8-oxoguanine-DNA + H2O = 8-oxo-dGMP + a 3'-end 2'-deoxyribonucleotide-DNA + H(+). Its activity is regulated as follows. NPM1 stimulates endodeoxyribonuclease activity on double-stranded DNA with AP sites, but inhibits endoribonuclease activity on single-stranded RNA containing AP sites. Functionally, multifunctional protein that plays a central role in the cellular response to oxidative stress. The two major activities of APEX1 are DNA repair and redox regulation of transcriptional factors. Functions as an apurinic/apyrimidinic (AP) endodeoxyribonuclease in the base excision repair (BER) pathway of DNA lesions induced by oxidative and alkylating agents. Initiates repair of AP sites in DNA by catalyzing hydrolytic incision of the phosphodiester backbone immediately adjacent to the damage, generating a single-strand break with 5'-deoxyribose phosphate and 3'-hydroxyl ends. Also incises at AP sites in the DNA strand of DNA/RNA hybrids, single-stranded DNA regions of R-loop structures, and single-stranded RNA molecules. Operates at switch sites of immunoglobulin (Ig) constant regions where it mediates Ig isotype class switch recombination. Processes AP sites induced by successive action of AICDA and UNG. Generates staggered nicks in opposite DNA strands resulting in the formation of double-strand DNA breaks that are finally resolved via non-homologous end joining repair pathway. Has 3'-5' exodeoxyribonuclease activity on mismatched deoxyribonucleotides at the 3' termini of nicked or gapped DNA molecules during short-patch BER. Possesses DNA 3' phosphodiesterase activity capable of removing lesions (such as phosphoglycolate and 8-oxoguanine) blocking the 3' side of DNA strand breaks. Also acts as an endoribonuclease involved in the control of single-stranded RNA metabolism. Plays a role in regulating MYC mRNA turnover by preferentially cleaving in between UA and CA dinucleotides of the MYC coding region determinant (CRD). In association with NMD1, plays a role in the rRNA quality control process during cell cycle progression. Acts as a loading factor for POLB onto non-incised AP sites in DNA and stimulates the 5'-terminal deoxyribose 5'-phosphate (dRp) excision activity of POLB. Exerts reversible nuclear redox activity to regulate DNA binding affinity and transcriptional activity of transcriptional factors by controlling the redox status of their DNA-binding domain, such as the FOS/JUN AP-1 complex after exposure to IR. Involved in calcium-dependent down-regulation of parathyroid hormone (PTH) expression by binding to negative calcium response elements (nCaREs). Together with HNRNPL or the dimer XRCC5/XRCC6, associates with nCaRE, acting as an activator of transcriptional repression. May also play a role in the epigenetic regulation of gene expression by participating in DNA demethylation. Stimulates the YBX1-mediated MDR1 promoter activity, when acetylated at Lys-6 and Lys-7, leading to drug resistance. Plays a role in protection from granzyme-mediated cellular repair leading to cell death. Binds DNA and RNA. Associates, together with YBX1, on the MDR1 promoter. Together with NPM1, associates with rRNA. The chain is DNA repair nuclease/redox regulator APEX1 (Apex1) from Rattus norvegicus (Rat).